We begin with the raw amino-acid sequence, 441 residues long: Keratin, type I cytoskeletal 17 (441 aa).

Positions 1-23 are disordered; that stretch reads MTTTIRHFSSGSIKGSSGLAGGS. Residues 1–91 are head; sequence MTTTIRHFSS…GGVDGLLVGG (91 aa). Residues 9-23 are compositionally biased toward low complexity; that stretch reads SSGSIKGSSGLAGGS. A Phosphoserine modification is found at serine 12. Lysine 14 is covalently cross-linked (Glycyl lysine isopeptide (Lys-Gly) (interchain with G-Cter in SUMO1); alternate). Residue lysine 14 forms a Glycyl lysine isopeptide (Lys-Gly) (interchain with G-Cter in SUMO2); alternate linkage. Phosphoserine occurs at positions 24, 30, 32, and 37. Phosphoserine; by RPS6KA1 is present on serine 42. Positions 92–128 are coil 1A; it reads EKATMQNLNDRLASYLDKVRALEEANTELELKIRDWY. An IF rod domain is found at 92 to 403; it reads EKATMQNLND…RLLEGEDAHL (312 aa). Position 118 is a phosphothreonine (threonine 118). Positions 129 to 146 are linker 1; that stretch reads QKQAPGPAPDYSSYFKTI. Positions 147 to 238 are coil 1B; that stretch reads EDLRNKIHTA…NHEEEMKALR (92 aa). The segment at 239–258 is linker 12; it reads GQVGGEINVEMDAAPGVDLS. The interval 259–400 is coil 2; the sequence is RILNEMRDQY…TYRRLLEGED (142 aa). A Glycyl lysine isopeptide (Lys-Gly) (interchain with G-Cter in SUMO2) cross-link involves residue lysine 286. Threonine 287 bears the Phosphothreonine mark. Serine 331 is subject to Phosphoserine. Positions 401–441 are tail; the sequence is AHLTQYKTKEPVTTRQVRTIVEEVQDGRVISSREQVHQTSH. Glycyl lysine isopeptide (Lys-Gly) (interchain with G-Cter in SUMO1); alternate cross-links involve residues lysine 407 and lysine 409. Glycyl lysine isopeptide (Lys-Gly) (interchain with G-Cter in SUMO2); alternate cross-links involve residues lysine 407 and lysine 409.

This sequence belongs to the intermediate filament family. In terms of assembly, heterodimer of a type I and a type II keratin. KRT17 associates with KRT6 isomers (KRT6A or KRT6B). Interacts with TRADD and SFN. Post-translationally, phosphorylation at Ser-42 occurs in a growth- and stress-dependent fashion in skin keratinocytes, it has no effect on filament organization.

The protein localises to the cytoplasm. Functionally, type I keratin involved in the formation and maintenance of various skin appendages, specifically in determining shape and orientation of hair. Required for the correct growth of hair follicles, in particular for the persistence of the anagen (growth) state. Modulates the function of TNF-alpha in the specific context of hair cycling. Regulates protein synthesis and epithelial cell growth through binding to the adapter protein SFN and by stimulating Akt/mTOR pathway. Involved in tissue repair. May be a marker of basal cell differentiation in complex epithelia and therefore indicative of a certain type of epithelial 'stem cells'. Acts as a promoter of epithelial proliferation by acting a regulator of immune response in skin: promotes Th1/Th17-dominated immune environment contributing to the development of basaloid skin tumors. May act as an autoantigen in the immunopathogenesis of psoriasis, with certain peptide regions being a major target for autoreactive T-cells and hence causing their proliferation. The polypeptide is Keratin, type I cytoskeletal 17 (Bos taurus (Bovine)).